Reading from the N-terminus, the 477-residue chain is 3-isopropylmalate dehydratase large subunit (477 aa).

Residues cysteine 351, cysteine 411, and cysteine 414 each contribute to the [4Fe-4S] cluster site.

This sequence belongs to the aconitase/IPM isomerase family. LeuC type 1 subfamily. Heterodimer of LeuC and LeuD. It depends on [4Fe-4S] cluster as a cofactor.

The enzyme catalyses (2R,3S)-3-isopropylmalate = (2S)-2-isopropylmalate. Its pathway is amino-acid biosynthesis; L-leucine biosynthesis; L-leucine from 3-methyl-2-oxobutanoate: step 2/4. Its function is as follows. Catalyzes the isomerization between 2-isopropylmalate and 3-isopropylmalate, via the formation of 2-isopropylmaleate. In Kineococcus radiotolerans (strain ATCC BAA-149 / DSM 14245 / SRS30216), this protein is 3-isopropylmalate dehydratase large subunit.